A 263-amino-acid chain; its full sequence is Aquaporin Lacbi1:233199 (263 aa).

Over 1–17 (MFTLAHHRHAIRKPMAE) the chain is Cytoplasmic. The chain crosses the membrane as a helical span at residues 18–38 (FFGVALLVIFGAGAACQVVLS). The Extracellular segment spans residues 39 to 44 (TNPNSF). Residues 45 to 65 (LSINFGWAIGIAMGAWISGSI) traverse the membrane as a helical segment. The Cytoplasmic portion of the chain corresponds to 66–88 (SGGHINPAITIAMATYRGFPWRE). The NPA 1 motif lies at 71–73 (NPA). Residues 89–109 (VPSYILAQVLGGVVGAALVYA) form a helical membrane-spanning segment. The Extracellular segment spans residues 110 to 143 (NYIHAIDVFEGGRHIRTQATASLFATYALPYMTQ). A helical membrane pass occupies residues 144 to 164 (VSCFFSEFLATAVLAMMVLAL). Over 165–174 (TDNRNGAPTN) the chain is Cytoplasmic. A helical transmembrane segment spans residues 175-195 (GLSPFALFVLFIGLGASLGME). Topologically, residues 196–227 (TAYALNPARDFGPRLFLAMAGYGKALFNYRSQ) are extracellular. The NPA 2 motif lies at 201-203 (NPA). Residues 228–248 (YWLWAPIIAPVLGAQAGGLLY) form a helical membrane-spanning segment. Residues 249–263 (DTFLYDGDDSPIKWR) lie on the Cytoplasmic side of the membrane.

Belongs to the MIP/aquaporin (TC 1.A.8) family.

It is found in the membrane. It carries out the reaction H2O(in) = H2O(out). Its function is as follows. Probable water channel required to facilitate the transport of water across membranes. The polypeptide is Aquaporin Lacbi1:233199 (Laccaria bicolor (strain S238N-H82 / ATCC MYA-4686) (Bicoloured deceiver)).